We begin with the raw amino-acid sequence, 1008 residues long: Probable transport protein MmpL10 (1008 aa).

A run of 12 helical transmembrane segments spans residues 23 to 43 (WPWV…MTVP), 202 to 222 (IELV…RNPI), 225 to 245 (LLPL…VSGV), 257 to 277 (MIVL…VFLI), 301 to 321 (ALIS…ITFL), 340 to 360 (IGIA…LVLA), 389 to 409 (VAYL…ASLV), 835 to 855 (DLQL…MALL), 862 to 882 (IYLV…CVLV), 895 to 915 (VPGL…MLLA), 940 to 960 (VITA…LSSI), and 961 to 981 (ATVV…TFIV).

This sequence belongs to the resistance-nodulation-cell division (RND) (TC 2.A.6) family. MmpL subfamily.

The protein localises to the cell membrane. The polypeptide is Probable transport protein MmpL10 (mmpL10) (Mycobacterium leprae (strain TN)).